The primary structure comprises 518 residues: Voltage-gated potassium channel regulatory subunit KCNG2 (518 aa).

Over 1-214 (MALLTGNADR…DMVENPHSGI (214 aa)) the chain is Cytoplasmic. Residues 215 to 236 (PGKIFACISISFVAITAVSLCI) traverse the membrane as a helical segment. Residues 237–257 (STMPDVREEEDRGECSQKCYD) lie on the Extracellular side of the membrane. A helical membrane pass occupies residues 258 to 279 (IFVLETVCVAWFSFEFLLRSIQ). The Cytoplasmic portion of the chain corresponds to 280 to 290 (AENKCAFLKTP). The chain crosses the membrane as a helical span at residues 291–311 (LNIIDILAILPFYISLIVDMA). The Extracellular segment spans residues 312 to 331 (STKNSSKPGGGAGNKYLERV). Residues 332 to 352 (GLVLRFLRALRILYVMRLARH) form a helical; Voltage-sensor membrane-spanning segment. At 353 to 367 (SLGLQTLGLTVRRCT) the chain is on the cytoplasmic side. A helical membrane pass occupies residues 368-389 (REFGLLLLFLCVAMALFSPLVY). The Extracellular segment spans residues 390–404 (LAESELGAKQEFTSI). The segment at residues 405–416 (PTSYWWAVISMT) is an intramembrane region (helical). Positions 417–422 (TVGYGD) match the Selectivity filter motif. The stretch at 417–424 (TVGYGDMV) is an intramembrane region. The Extracellular portion of the chain corresponds to 425-431 (PRSIPGQ). The chain crosses the membrane as a helical span at residues 432–460 (VVALSSILSGILLMAFPVTSIFHTFSRSY). Over 461 to 518 (SELKEQQQRAASRQMHQLEESTKLAGGGSSQWITAASPPDAAREDGRPELDQEAKRSC) the chain is Cytoplasmic. A disordered region spans residues 473–518 (RQMHQLEESTKLAGGGSSQWITAASPPDAAREDGRPELDQEAKRSC). Basic and acidic residues predominate over residues 501–518 (AAREDGRPELDQEAKRSC).

Belongs to the potassium channel family. G (TC 1.A.1.2) subfamily. Kv6.2/KCNG2 sub-subfamily. Heterodimer with KCNB1.

It is found in the cell membrane. Functionally, regulatory alpha-subunit of the voltage-gated potassium (Kv) channel which, when coassembled with KCNB1, can modulate the kinetics and conductance-voltage relationship. Modulates channel activity by shifting the threshold and the half-maximal activation to more negative values. Potassium channel subunit that does not form functional channels by itself. In Gallus gallus (Chicken), this protein is Voltage-gated potassium channel regulatory subunit KCNG2.